The chain runs to 342 residues: Homocysteine S-methyltransferase 4 (342 aa).

Residues 13-328 (ALRGFVREAG…ATVRAIARAV (316 aa)) form the Hcy-binding domain. Positions 245, 313, and 314 each coordinate Zn(2+).

As to quaternary structure, monomer. Zn(2+) serves as cofactor.

It carries out the reaction S-methyl-L-methionine + L-homocysteine = 2 L-methionine + H(+). Its function is as follows. Catalyzes methyl transfer from S-methylmethionine (SMM) to adenosyl-L-homocysteine (AdoMet). SMM degradation (by HMT-1, HMT-2, HMT-3 and HMT-4) and biosynthesis (by MMT1) constitute the SMM cycle in plants, which is probably required to achieve short term control of AdoMet level. In Zea mays (Maize), this protein is Homocysteine S-methyltransferase 4 (HMT-4).